The sequence spans 1408 residues: DNA-directed RNA polymerase subunit beta' (1408 aa).

Residues cysteine 70, cysteine 72, cysteine 85, and cysteine 88 each contribute to the Zn(2+) site. Residues aspartate 460, aspartate 462, and aspartate 464 each coordinate Mg(2+). Zn(2+) is bound by residues cysteine 814, cysteine 888, cysteine 895, and cysteine 898.

The protein belongs to the RNA polymerase beta' chain family. In terms of assembly, the RNAP catalytic core consists of 2 alpha, 1 beta, 1 beta' and 1 omega subunit. When a sigma factor is associated with the core the holoenzyme is formed, which can initiate transcription. Mg(2+) is required as a cofactor. The cofactor is Zn(2+).

It carries out the reaction RNA(n) + a ribonucleoside 5'-triphosphate = RNA(n+1) + diphosphate. Functionally, DNA-dependent RNA polymerase catalyzes the transcription of DNA into RNA using the four ribonucleoside triphosphates as substrates. This is DNA-directed RNA polymerase subunit beta' from Baumannia cicadellinicola subsp. Homalodisca coagulata.